The chain runs to 333 residues: Protein 2 (333 aa).

Disordered regions lie at residues 1–41 and 57–84; these read MTGR…SENA and LGAG…LPPT. Residues 24 to 33 are compositionally biased toward polar residues; that stretch reads QETTKQTTSA. The span at 62 to 79 shows a compositional bias: acidic residues; the sequence is DYDETEADPADTYGDTEA.

The sequence is that of Protein 2 from Lactuca sativa (Garden lettuce).